A 160-amino-acid chain; its full sequence is Periplasmic nitrate reductase, electron transfer subunit (160 aa).

The signal sequence occupies residues 1-25 (MKTRIIFAALALAAAMPLLVSGVFA). Heme c is bound by residues histidine 73, cysteine 87, cysteine 90, histidine 91, histidine 108, cysteine 127, cysteine 130, and histidine 131.

It belongs to the NapB family. Component of the periplasmic nitrate reductase NapAB complex composed of NapA and NapB. Binds 2 heme C groups per subunit.

The protein localises to the periplasm. Functionally, electron transfer subunit of the periplasmic nitrate reductase complex NapAB. Receives electrons from the membrane-anchored tetraheme c-type NapC protein and transfers these to NapA subunit, thus allowing electron flow between membrane and periplasm. Essential for periplasmic nitrate reduction with nitrate as the terminal electron acceptor. The polypeptide is Periplasmic nitrate reductase, electron transfer subunit (Azospirillum brasilense).